Consider the following 323-residue polypeptide: 2-methylene-furan-3-one reductase (323 aa).

Residues Lys-59, 174 to 175, 197 to 200, Tyr-216, Ile-254, 265 to 267, and 312 to 313 contribute to the NADP(+) site; these read GV, STKK, FVL, and RA. Lys-59 is a binding site for substrate.

Belongs to the zinc-containing alcohol dehydrogenase family. Quinone oxidoreductase subfamily. As to quaternary structure, monomer. The N-terminus is blocked. Expressed in parenchyma tissues of red fruits. Not found in vascular tissues. Also detected in the achenes.

It carries out the reaction 4-hydroxy-2,5-dimethyl-furan-3(2H)-one + NADP(+) = 4-hydroxy-5-methyl-2-methylenefuran-3(2H)-one + NADPH + H(+). Functionally, enone oxidoreductase involved in the biosynthesis of 4-hydroxy-2,5-dimethyl-3(2H)-furanone (HDMF or furaneol), the key flavor compound in strawberries. Can use both NADH and NADPH as the electron donor. The polypeptide is 2-methylene-furan-3-one reductase (EO) (Fragaria ananassa (Strawberry)).